We begin with the raw amino-acid sequence, 214 residues long: Large ribosomal subunit protein uL3 (214 aa).

The tract at residues 133 to 154 (GLGAGHGTQRKHRSPGSIGGCA) is disordered.

This sequence belongs to the universal ribosomal protein uL3 family. Part of the 50S ribosomal subunit. Forms a cluster with proteins L14 and L19.

In terms of biological role, one of the primary rRNA binding proteins, it binds directly near the 3'-end of the 23S rRNA, where it nucleates assembly of the 50S subunit. The sequence is that of Large ribosomal subunit protein uL3 from Streptomyces avermitilis (strain ATCC 31267 / DSM 46492 / JCM 5070 / NBRC 14893 / NCIMB 12804 / NRRL 8165 / MA-4680).